The following is a 190-amino-acid chain: Large ribosomal subunit protein uL6A (190 aa).

This sequence belongs to the universal ribosomal protein uL6 family. In terms of assembly, component of the large ribosomal subunit (LSU). Mature yeast ribosomes consist of a small (40S) and a large (60S) subunit. The 40S small subunit contains 1 molecule of ribosomal RNA (18S rRNA) and at least 33 different proteins. The large 60S subunit contains 3 rRNA molecules (25S, 5.8S and 5S rRNA) and at least 46 different proteins. uL6 lines the binding pocket for eukaryotic elongation factor 2 (eEF2).

The protein localises to the cytoplasm. It is found in the nucleus. Functionally, component of the ribosome, a large ribonucleoprotein complex responsible for the synthesis of proteins in the cell. The small ribosomal subunit (SSU) binds messenger RNAs (mRNAs) and translates the encoded message by selecting cognate aminoacyl-transfer RNA (tRNA) molecules. The large subunit (LSU) contains the ribosomal catalytic site termed the peptidyl transferase center (PTC), which catalyzes the formation of peptide bonds, thereby polymerizing the amino acids delivered by tRNAs into a polypeptide chain. The nascent polypeptides leave the ribosome through a tunnel in the LSU and interact with protein factors that function in enzymatic processing, targeting, and the membrane insertion of nascent chains at the exit of the ribosomal tunnel. The polypeptide is Large ribosomal subunit protein uL6A (rpl901) (Schizosaccharomyces pombe (strain 972 / ATCC 24843) (Fission yeast)).